The sequence spans 188 residues: Marginal zone B- and B1-cell-specific protein (188 aa).

The signal sequence occupies residues 1–20 (MRLPLPLLLLFGCRAILGSA). Disulfide bonds link Cys-49–Cys-177, Cys-52–Cys-170, and Cys-94–Cys-142. A Prevents secretion from ER motif is present at residues 185–188 (REEL).

This sequence belongs to the MZB1 family. As to quaternary structure, part of the ER chaperone complex, a multi-protein complex in the endoplasmic reticulum containing a large number of molecular chaperones which associates with unassembled incompletely folded immunoglobulin heavy chains. Interacts with HSP90B1 and PDIA3 in a calcium-dependent manner. In terms of processing, forms an interchain disulfide bond with IgM monomers. In terms of tissue distribution, expressed predominantly in the spleen and lymph nodes. Abundantly expressed in marginal zone B and B1 cells. High expression in mesenteric adipose tissue (MAT). Expressed also in pancreas, perigonadal adipose tissue (PAT), uterus, subcutaneous adipose tissue, heart, muscle, ovary and liver. Very low expression is detected in brown adipose tissue. In PAT, significantly higher expression in stromal-vascular cell than in adipocytes. Expressed in macrophage RAW 264.7 cell line. Down-regulated in For-knockout female MAT at 5 months (obese state) followed by steep up-regulation at 9 months (prediabetic condition) when mutants progress towards the metabolic syndrome.

Its subcellular location is the endoplasmic reticulum. It is found in the endoplasmic reticulum lumen. The protein localises to the secreted. Functionally, associates with immunoglobulin M (IgM) heavy and light chains and promotes IgM assembly and secretion. May exert its effect by acting as a molecular chaperone or as an oxidoreductase as it displays a low level of oxidoreductase activity. Helps to diversify peripheral B-cell functions by regulating Ca(2+) stores, antibody secretion and integrin activation. Acts as a hormone-regulated adipokine/pro-inflammatory cytokine that is implicated in causing chronic inflammation, affecting cellular expansion and blunting insulin response in adipocytes. May have a role in the onset of insulin resistance. The sequence is that of Marginal zone B- and B1-cell-specific protein (Mzb1) from Mus musculus (Mouse).